The chain runs to 413 residues: CCA-adding enzyme (413 aa).

The ATP site is built by Ser42 and Lys45. CTP is bound by residues Ser42 and Lys45. Residues Asp54, Asp56, and Asp107 each coordinate Mg(2+). Residues His130, Lys150, and Tyr159 each contribute to the ATP site. CTP is bound by residues His130, Lys150, and Tyr159.

Belongs to the tRNA nucleotidyltransferase/poly(A) polymerase family. Archaeal CCA-adding enzyme subfamily. In terms of assembly, homodimer. The cofactor is Mg(2+).

It carries out the reaction a tRNA precursor + 2 CTP + ATP = a tRNA with a 3' CCA end + 3 diphosphate. It catalyses the reaction a tRNA with a 3' CCA end + 2 CTP + ATP = a tRNA with a 3' CCACCA end + 3 diphosphate. Functionally, catalyzes the addition and repair of the essential 3'-terminal CCA sequence in tRNAs without using a nucleic acid template. Adds these three nucleotides in the order of C, C, and A to the tRNA nucleotide-73, using CTP and ATP as substrates and producing inorganic pyrophosphate. tRNA 3'-terminal CCA addition is required both for tRNA processing and repair. Also involved in tRNA surveillance by mediating tandem CCA addition to generate a CCACCA at the 3' terminus of unstable tRNAs. While stable tRNAs receive only 3'-terminal CCA, unstable tRNAs are marked with CCACCA and rapidly degraded. This chain is CCA-adding enzyme, found in Sulfurisphaera tokodaii (strain DSM 16993 / JCM 10545 / NBRC 100140 / 7) (Sulfolobus tokodaii).